We begin with the raw amino-acid sequence, 546 residues long: MTYGGRDQQYNKTNYNSRGGDFRGGRNSDRNSYNDRPQGGNYRGGFGGRSNYNQPQELIKPNWDEELPKLPTFEKNFYVEHESVRDRSDSEIAQFRKENEMTISGHDIPKPITTFDEAGFPDYVLNEVKAEGFDKPTGIQCQGWPMALSGRDMVGIAATGSGKTLSYCLPGIVHINAQPLLAPGDGPIVLVLAPTRELAVQIQTECSKFGHSSRIRNTCVYGGVPKSQQIRDLSRGSEIVIATPGRLIDMLEIGKTNLKRVTYLVLDEADRMLDMGFEPQIRKIVDQIRPDRQTLMWSATWPKEVKQLAADYLNDPIQVQVGSLELSASHNITQIVEVVSDFEKRDRLNKYLETASQDNEYKTLIFASTKRMCDDITKYLREDGWPALAIHGDKDQRERDWVLQEFRNGRSPIMVATDVAARGIDVKGINYVINYDMPGNIEDYVHRIGRTGRAGATGTAISFFTEQNKGLGAKLISIMREANQNIPPELLKYDRRSYGGGHPRYGGGRGGRGGYGRRGGYGGGRGGYGGNRQRDGGWGNRGRSNY.

A disordered region spans residues Met-1–Gln-56. The segment covering Gln-8 to Ser-17 has biased composition (polar residues). The segment covering Gly-20–Tyr-33 has biased composition (basic and acidic residues). A phosphoserine mark is found at Ser-88 and Ser-90. The Q motif signature appears at Thr-113–Cys-141. The region spanning Trp-144–Val-319 is the Helicase ATP-binding domain. Residue Ala-157–Thr-164 participates in ATP binding. The DEAD box motif lies at Asp-267–Asp-270. Residues Arg-347–Asp-494 form the Helicase C-terminal domain. A Glycyl lysine isopeptide (Lys-Gly) (interchain with G-Cter in ubiquitin) cross-link involves residue Lys-474. A disordered region spans residues Tyr-493–Tyr-546. Residues Tyr-498–Asn-540 are compositionally biased toward gly residues.

It belongs to the DEAD box helicase family. DDX5/DBP2 subfamily. As to quaternary structure, associates with polysomes.

It localises to the cytoplasm. It is found in the nucleus. It carries out the reaction ATP + H2O = ADP + phosphate + H(+). Its function is as follows. ATP-dependent RNA helicase involved nonsense-mediated mRNA decay and ribosome biogenesis through rRNA processing. The chain is ATP-dependent RNA helicase DBP2 (DBP2) from Saccharomyces cerevisiae (strain YJM789) (Baker's yeast).